A 197-amino-acid polypeptide reads, in one-letter code: Probable GTP-binding protein EngB (197 aa).

Residues 22–195 (ALPELALVGR…WQWIEERTGV (174 aa)) enclose the EngB-type G domain. GTP contacts are provided by residues 30 to 37 (GRSNVGKS), 57 to 61 (GKTQT), 75 to 78 (DVPG), 142 to 145 (TKVD), and 174 to 176 (FSA). Positions 37 and 59 each coordinate Mg(2+).

It belongs to the TRAFAC class TrmE-Era-EngA-EngB-Septin-like GTPase superfamily. EngB GTPase family. Requires Mg(2+) as cofactor.

Functionally, necessary for normal cell division and for the maintenance of normal septation. In Limosilactobacillus fermentum (strain NBRC 3956 / LMG 18251) (Lactobacillus fermentum), this protein is Probable GTP-binding protein EngB.